Reading from the N-terminus, the 475-residue chain is Zinc finger protein 296 (475 aa).

The disordered stretch occupies residues Met-1–Ala-78. Lys-35 is covalently cross-linked (Glycyl lysine isopeptide (Lys-Gly) (interchain with G-Cter in SUMO2)). 3 C2H2-type zinc fingers span residues Leu-157 to His-180, Pro-231 to His-253, and Tyr-259 to His-281. The disordered stretch occupies residues Asn-275 to Gly-385. Composition is skewed to low complexity over residues Ser-295–Pro-313 and Gly-326–Ala-338. Gly residues predominate over residues Pro-339 to Thr-351. The span at Ala-354–Gln-367 shows a compositional bias: polar residues. C2H2-type zinc fingers lie at residues Gly-386–His-408, Tyr-414–His-436, and Phe-445–His-468.

This sequence belongs to the krueppel C2H2-type zinc-finger protein family. As to quaternary structure, interacts with KLF4.

It is found in the nucleus. Its function is as follows. May be a transcriptional corepressor with KLF4. The protein is Zinc finger protein 296 (ZNF296) of Homo sapiens (Human).